A 214-amino-acid chain; its full sequence is 3-demethoxyubiquinol 3-hydroxylase (214 aa).

Positions 63, 93, 96, 145, 177, and 180 each coordinate Fe cation.

The protein belongs to the COQ7 family. It depends on Fe cation as a cofactor.

The protein resides in the cell membrane. The catalysed reaction is a 5-methoxy-2-methyl-3-(all-trans-polyprenyl)benzene-1,4-diol + AH2 + O2 = a 3-demethylubiquinol + A + H2O. It participates in cofactor biosynthesis; ubiquinone biosynthesis. Functionally, catalyzes the hydroxylation of 2-nonaprenyl-3-methyl-6-methoxy-1,4-benzoquinol during ubiquinone biosynthesis. In Psychrobacter cryohalolentis (strain ATCC BAA-1226 / DSM 17306 / VKM B-2378 / K5), this protein is 3-demethoxyubiquinol 3-hydroxylase.